Reading from the N-terminus, the 294-residue chain is Beta-glucoside kinase (294 aa).

5-11 (AFDIGGT) contributes to the ATP binding site.

This sequence belongs to the ROK (NagC/XylR) family.

It carries out the reaction D-cellobiose + ATP = 6-phospho-beta-D-glucosyl-(1-&gt;4)-D-glucose + ADP + H(+). Catalyzes the ATP-dependent phosphorylation of cellobiose to produce cellobiose-6'-P. May have a dual role of kinase and transcriptional regulator of the cellobiose-PTS operon. This Listeria innocua serovar 6a (strain ATCC BAA-680 / CLIP 11262) protein is Beta-glucoside kinase (bglK).